A 391-amino-acid polypeptide reads, in one-letter code: Mannonate dehydratase (391 aa).

The segment at 334–359 (ERRRERDGGPRLPLRPDHGHHLLDDL) is disordered.

It belongs to the mannonate dehydratase family. It depends on Fe(2+) as a cofactor. The cofactor is Mn(2+).

It carries out the reaction D-mannonate = 2-dehydro-3-deoxy-D-gluconate + H2O. Its pathway is carbohydrate metabolism; pentose and glucuronate interconversion. Catalyzes the dehydration of D-mannonate. This chain is Mannonate dehydratase, found in Chromohalobacter salexigens (strain ATCC BAA-138 / DSM 3043 / CIP 106854 / NCIMB 13768 / 1H11).